We begin with the raw amino-acid sequence, 467 residues long: Cilia- and flagella-associated protein 97 (467 aa).

Disordered stretches follow at residues 1-20, 76-235, 336-370, and 412-467; these read MDRY…FFDS, IAKP…DISP, RQAA…KEQQ, and ALSP…AAWQ. Residues 124 to 135 show a composition bias toward acidic residues; the sequence is DNYYPDEEDSSE. A compositionally biased stretch (polar residues) spans 162 to 177; sequence DFVSTISSSDTEYSDT. Low complexity predominate over residues 180-194; that stretch reads DDGASKSSYQSSKGS. Positions 198–216 are enriched in basic and acidic residues; that stretch reads SPERKPSRSSMRELRHYAE. A compositionally biased stretch (polar residues) spans 223 to 235; that stretch reads TDVTPLSTPDISP. Residues 310–387 adopt a coiled-coil conformation; it reads KKNFSFSNDE…ALLKRLESVK (78 aa). A compositionally biased stretch (low complexity) spans 421–439; it reads SVSRLSPSVSSGGFSRMSS.

Belongs to the CFAP97 family.

In Xenopus tropicalis (Western clawed frog), this protein is Cilia- and flagella-associated protein 97.